The chain runs to 22 residues: Sex pheromone inhibitor determinant (22 aa).

The propeptide occupies 1–14 (MSKRAMKKIIPLIT).

Its subcellular location is the secreted. Its function is as follows. Acts as a competitive inhibitor of the CAD1 pheromone. The chain is Sex pheromone inhibitor determinant (iad) from Enterococcus faecalis (strain ATCC 700802 / V583).